The following is a 743-amino-acid chain: GTPase-activating protein gyp7 (743 aa).

A Rab-GAP TBC domain is found at 411-633 (GIQPSLRKEV…KLWDVLFTNY (223 aa)).

Its subcellular location is the cytoplasm. It is found in the nucleus. Functionally, most effectively accelerates the intrinsic GTPase activity of ypt7. The chain is GTPase-activating protein gyp7 from Schizosaccharomyces pombe (strain 972 / ATCC 24843) (Fission yeast).